The sequence spans 351 residues: Serine protease inhibitor dipetalogastin (351 aa).

Residues 1–131 (LIKELVNMVI…AETTNAMEVL (131 aa)) constitute a propeptide that is removed on maturation. 6 consecutive Kazal-like domains span residues 19-69 (KELK…PCDE), 72-122 (HDFE…ECHA), 131-181 (LFQG…PCDE), 184-234 (HDFE…ECHP), 240-289 (QLIL…ECKV), and 297-347 (GEVR…RCLP). 18 disulfide bridges follow: cysteine 25/cysteine 50, cysteine 27/cysteine 46, cysteine 35/cysteine 67, cysteine 78/cysteine 103, cysteine 80/cysteine 99, cysteine 88/cysteine 120, cysteine 137/cysteine 162, cysteine 139/cysteine 158, cysteine 147/cysteine 179, cysteine 190/cysteine 215, cysteine 192/cysteine 211, cysteine 200/cysteine 232, cysteine 246/cysteine 271, cysteine 248/cysteine 267, cysteine 256/cysteine 287, cysteine 303/cysteine 328, cysteine 305/cysteine 324, and cysteine 313/cysteine 345.

The protein resides in the secreted. Functionally, thrombin inhibitor. Prevents blood clotting to allow insect to feed on blood. Also functions as an inhibitor of trypsin and plasmin. This chain is Serine protease inhibitor dipetalogastin, found in Dipetalogaster maximus (Blood-sucking bug).